The following is a 714-amino-acid chain: BRCA1-associated RING domain protein 1 (714 aa).

An RING-type zinc finger spans residues 25 to 63 (CPLCLKLLNRPVLLPCDHVFCDSCVHKSSQVESGCPVCK). Disordered regions lie at residues 106-165 (YKND…QDWT) and 254-283 (KAQNHQQLPKSHTEQDSKRKRDITASDAME). Residues 118 to 134 (KHGESEDSEMTDKDVSK) show a composition bias toward basic and acidic residues. Over residues 135-147 (RSGGTDSSSRDGS) the composition is skewed to low complexity. Composition is skewed to basic and acidic residues over residues 155-165 (SDPRPKHQDWT) and 264-283 (SHTEQDSKRKRDITASDAME). The segment at 331–382 (ITICGFCQSARVSEATGEMLHYSRGRPVDGDDIFRSNVIHVHSACIEWAPQV) adopts a C2HC pre-PHD-type zinc-finger fold. The PHD-type zinc finger occupies 402-451 (IKCTKCSLKGAALGCFVKSCRRSYHVPCAREISRCRWDYEDFLLLCPAHS). BRCT domains lie at 482–577 (EQTP…PFEI) and 598–713 (NKPK…HPVI).

As to quaternary structure, component of a DNA-protein complex on WUS and WOX5 promoters. Interacts with SYD. Forms heterodimer with BRCA1. As to expression, expressed in the shoot apical meristem (SAM), roots, flowers, embryos and seedlings. Mostly expressed in flowers and siliques, and, to a lower extent, in roots, rosette leaves, inflorescence and young cauline leaves.

It localises to the nucleus. In terms of biological role, binds specifically to H3K4me3 regions of target genes (e.g. WUS and WOX5) promoters to repress their transcription via chromatin remodeling. Required for the shoot apical meristem (SAM) organization and maintenance, by confining WUS expression to the organizing center, and for the quiescent center (QC) development in the root apical meristem (RAM), by repressing WOX5 expression in the root proximal meristem. Plays a role in DNA repair and in cell-cycle control. Required for the repair of DNA double-strand breaks (DSBs), both natural and induced by genotoxic stress, by homologous recombination (HR). This is BRCA1-associated RING domain protein 1 from Arabidopsis thaliana (Mouse-ear cress).